Reading from the N-terminus, the 887-residue chain is MERSLELLLLLIRTLAIIHISQAQSQQGFISLDCGLPANEPSPYTEPRTGLQFSSDAAFIQSGKIGRIQANLEADFLKPSTTMRYFPDGKRNCYNLNVEKGRNHLIRARFVYGNYDGRDTGPKFDLYLGPNPWATIDLAKQVNGTRPEIMHIPTSNKLQVCLVKTGETTPLISVLEVRPMGSGTYLTKSGSLKLYYREYFSKSDSSLRYPDDIYDRQWTSFFDTEWTQINTTSDVGNSNDYKPPKVALTTAAIPTNASAPLTNEWSSVNPDEQYYVYAHFSEIQELQANETREFNMLLNGKLFFGPVVPPKLAISTILSVSPNTCEGGECNLQLIRTNRSTLPPLLNAYEVYKVIQFPQLETNETDVSAVKNIQATYELSRINWQSDPCVPQQFMWDGLNCSITDITTPPRITTLNLSSSGLTGTITAAIQNLTTLEKLDLSNNNLTGEVPEFLSNMKSLLVINLSGNDLNGTIPQSLQRKGLELLYQGNPRLISPGSTETKSGKSFPVTIVASVGSAAILIVVLVLVLFLRKKKPSAVEVVLPRPSRPTMNVPYANSPEPSIEMKKRKFTYSEVTKMTNNFGRVVGEGGFGVVCHGTVNGSEQVAVKLLSQSSTQGYKEFKAEVDLLLRVHHTNLVSLVGYCDEGDHLALIYEFVPNGDLRQHLSGKGGKPIVNWGTRLRIAAEAALGLEYLHIGCTPPMVHRDVKTTNILLDEHYKAKLADFGLSRSFPVGGESHVSTVIAGTPGYLDPEYYHTSRLSEKSDVYSFGIVLLEMITNQAVIDRNRRKSHITQWVGSELNGGDIAKIMDLKLNGDYDSRSAWRALELAMSCADPTSARRPTMSHVVIELKECLVSENSRRNMSRGMDTLSSPEVSMIFDAEMIPRAR.

Residues 1-23 form the signal peptide; it reads MERSLELLLLLIRTLAIIHISQA. Topologically, residues 25–510 are extracellular; it reads SQQGFISLDC…TKSGKSFPVT (486 aa). N-linked (GlcNAc...) asparagine glycans are attached at residues Asn143, Asn230, Asn256, Asn289, Asn338, Asn363, Asn400, Asn416, Asn432, Asn445, Asn464, and Asn471. LRR repeat units lie at residues 411–434, 435–457, and 459–481; these read RITT…QNLT, TLEK…LSNM, and SLLV…LQRK. Residues 511 to 531 traverse the membrane as a helical segment; that stretch reads IVASVGSAAILIVVLVLVLFL. Topologically, residues 532–887 are cytoplasmic; the sequence is RKKKPSAVEV…FDAEMIPRAR (356 aa). Position 571 is a phosphothreonine (Thr571). Positions 580–853 constitute a Protein kinase domain; it reads NNFGRVVGEG…HVVIELKECL (274 aa). ATP-binding positions include 586 to 594 and Lys608; that span reads VGEGGFGVV. At Tyr653 the chain carries Phosphotyrosine. Catalysis depends on Asp705, which acts as the Proton acceptor. The residue at position 739 (Ser739) is a Phosphoserine. Residues Thr740 and Thr745 each carry the phosphothreonine modification. Tyr753 carries the post-translational modification Phosphotyrosine.

The protein belongs to the protein kinase superfamily. Ser/Thr protein kinase family.

It is found in the membrane. It catalyses the reaction L-seryl-[protein] + ATP = O-phospho-L-seryl-[protein] + ADP + H(+). It carries out the reaction L-threonyl-[protein] + ATP = O-phospho-L-threonyl-[protein] + ADP + H(+). This Arabidopsis thaliana (Mouse-ear cress) protein is Probable LRR receptor-like serine/threonine-protein kinase At5g59680.